Here is a 60-residue protein sequence, read N- to C-terminus: Histidine-rich metal-binding polypeptide (60 aa).

Residues 1 to 60 (MAHHEEQHGGHHHHHHHTHHHHYHGGEHHHHHHSSHHEEGCCSTSDSHHQEEGCCHGHHE) form a disordered region. Residues 10-35 (GHHHHHHHTHHHHYHGGEHHHHHHSS) show a composition bias toward basic residues. The segment covering 36 to 60 (HHEEGCCSTSDSHHQEEGCCHGHHE) has biased composition (basic and acidic residues). Tandem repeats lie at residues 38 to 42 (EEGCC) and 51 to 55 (EEGCC). The 2 X 5 AA repeats of E-E-G-C-C stretch occupies residues 38 to 55 (EEGCCSTSDSHHQEEGCC).

Its function is as follows. Strongly binds nickel and zinc. Binds other metals less strongly: cobalt &gt; copper &gt; cadmium &gt; manganese. May act to increase, or at least to preserve, urease activity. Exact function is still unknown. The chain is Histidine-rich metal-binding polypeptide (hpn) from Helicobacter pylori (strain J99 / ATCC 700824) (Campylobacter pylori J99).